The chain runs to 354 residues: Uroporphyrinogen decarboxylase (354 aa).

Residues 27-31 (RQAGR), Phe46, Asp77, Tyr153, Thr208, and His326 each bind substrate.

It belongs to the uroporphyrinogen decarboxylase family. As to quaternary structure, homodimer.

The protein resides in the cytoplasm. It catalyses the reaction uroporphyrinogen III + 4 H(+) = coproporphyrinogen III + 4 CO2. The protein operates within porphyrin-containing compound metabolism; protoporphyrin-IX biosynthesis; coproporphyrinogen-III from 5-aminolevulinate: step 4/4. Catalyzes the decarboxylation of four acetate groups of uroporphyrinogen-III to yield coproporphyrinogen-III. In Neisseria meningitidis serogroup A / serotype 4A (strain DSM 15465 / Z2491), this protein is Uroporphyrinogen decarboxylase.